We begin with the raw amino-acid sequence, 442 residues long: Tubulin beta chain (442 aa).

Q11, E69, S138, G142, T143, G144, N204, and N226 together coordinate GTP. E69 is a binding site for Mg(2+). Residues 421–442 (EYQQYQDATAEDEEEMDEEQME) are disordered. The span at 429 to 442 (TAEDEEEMDEEQME) shows a compositional bias: acidic residues.

This sequence belongs to the tubulin family. Dimer of alpha and beta chains. A typical microtubule is a hollow water-filled tube with an outer diameter of 25 nm and an inner diameter of 15 nM. Alpha-beta heterodimers associate head-to-tail to form protofilaments running lengthwise along the microtubule wall with the beta-tubulin subunit facing the microtubule plus end conferring a structural polarity. Microtubules usually have 13 protofilaments but different protofilament numbers can be found in some organisms and specialized cells. Mg(2+) serves as cofactor.

Its subcellular location is the cytoplasm. The protein localises to the cytoskeleton. In terms of biological role, tubulin is the major constituent of microtubules, a cylinder consisting of laterally associated linear protofilaments composed of alpha- and beta-tubulin heterodimers. Microtubules grow by the addition of GTP-tubulin dimers to the microtubule end, where a stabilizing cap forms. Below the cap, tubulin dimers are in GDP-bound state, owing to GTPase activity of alpha-tubulin. This chain is Tubulin beta chain (TUBB1), found in Stylonychia lemnae (Ciliate).